A 357-amino-acid polypeptide reads, in one-letter code: tRNA N6-adenosine threonylcarbamoyltransferase (357 aa).

Residues H115 and H119 each contribute to the Fe cation site. Residues 137–141, D170, G183, and N281 each bind substrate; that span reads LASGG. Residue D309 coordinates Fe cation.

It belongs to the KAE1 / TsaD family. Requires Fe(2+) as cofactor.

The protein resides in the cytoplasm. The enzyme catalyses L-threonylcarbamoyladenylate + adenosine(37) in tRNA = N(6)-L-threonylcarbamoyladenosine(37) in tRNA + AMP + H(+). Required for the formation of a threonylcarbamoyl group on adenosine at position 37 (t(6)A37) in tRNAs that read codons beginning with adenine. Is involved in the transfer of the threonylcarbamoyl moiety of threonylcarbamoyl-AMP (TC-AMP) to the N6 group of A37, together with TsaE and TsaB. TsaD likely plays a direct catalytic role in this reaction. The chain is tRNA N6-adenosine threonylcarbamoyltransferase from Nitrobacter hamburgensis (strain DSM 10229 / NCIMB 13809 / X14).